A 134-amino-acid chain; its full sequence is GSH-induced LITAF domain protein (134 aa).

The region spanning 33–113 (DPLGAPIQQT…CGNKVADFEK (81 aa)) is the LITAF domain. Residues C53 and C56 each coordinate Zn(2+). Positions 68 to 88 (PGVAAVVACMMPFMLGFCFLC) are membrane-binding amphipathic helix. C101 and C104 together coordinate Zn(2+).

It belongs to the CDIP1/LITAF family. As to quaternary structure, interacts (via N- and C-terminal) with MIEL1 and LSD1 (via N-terminus).

It is found in the cell membrane. Functionally, acts as a membrane anchor, bringing other regulators of programmed cell death (PCD) to the plasma membrane. Negatively regulates hypersensitive cell death. The protein is GSH-induced LITAF domain protein of Arabidopsis thaliana (Mouse-ear cress).